The chain runs to 156 residues: 2-C-methyl-D-erythritol 2,4-cyclodiphosphate synthase (156 aa).

Residues Asp-9 and His-11 each coordinate a divalent metal cation. 4-CDP-2-C-methyl-D-erythritol 2-phosphate contacts are provided by residues 9 to 11 and 35 to 36; these read DAH and HS. His-43 provides a ligand contact to a divalent metal cation. 57–59 serves as a coordination point for 4-CDP-2-C-methyl-D-erythritol 2-phosphate; it reads DIG.

It belongs to the IspF family. Homotrimer. Requires a divalent metal cation as cofactor.

The enzyme catalyses 4-CDP-2-C-methyl-D-erythritol 2-phosphate = 2-C-methyl-D-erythritol 2,4-cyclic diphosphate + CMP. Its pathway is isoprenoid biosynthesis; isopentenyl diphosphate biosynthesis via DXP pathway; isopentenyl diphosphate from 1-deoxy-D-xylulose 5-phosphate: step 4/6. Functionally, involved in the biosynthesis of isopentenyl diphosphate (IPP) and dimethylallyl diphosphate (DMAPP), two major building blocks of isoprenoid compounds. Catalyzes the conversion of 4-diphosphocytidyl-2-C-methyl-D-erythritol 2-phosphate (CDP-ME2P) to 2-C-methyl-D-erythritol 2,4-cyclodiphosphate (ME-CPP) with a corresponding release of cytidine 5-monophosphate (CMP). The protein is 2-C-methyl-D-erythritol 2,4-cyclodiphosphate synthase of Hydrogenobaculum sp. (strain Y04AAS1).